A 275-amino-acid chain; its full sequence is Phosphate import ATP-binding protein PstB 1 (275 aa).

Positions Leu-22–Pro-261 constitute an ABC transporter domain. Position 54–61 (Gly-54–Ser-61) interacts with ATP.

This sequence belongs to the ABC transporter superfamily. Phosphate importer (TC 3.A.1.7) family. The complex is composed of two ATP-binding proteins (PstB), two transmembrane proteins (PstC and PstA) and a solute-binding protein (PstS).

It is found in the cell inner membrane. The catalysed reaction is phosphate(out) + ATP + H2O = ADP + 2 phosphate(in) + H(+). In terms of biological role, part of the ABC transporter complex PstSACB involved in phosphate import. Responsible for energy coupling to the transport system. This chain is Phosphate import ATP-binding protein PstB 1, found in Synechococcus sp. (strain JA-2-3B'a(2-13)) (Cyanobacteria bacterium Yellowstone B-Prime).